A 397-amino-acid chain; its full sequence is Elongation factor Tu (397 aa).

Residues 10–207 enclose the tr-type G domain; sequence KPHVNIGTIG…AVDTYIEEPK (198 aa). The interval 19 to 26 is G1; sequence GHVDHGKT. 19–26 contacts GTP; that stretch reads GHVDHGKT. Thr26 is a Mg(2+) binding site. The interval 60–64 is G2; sequence GITIN. Residues 81–84 form a G3 region; that stretch reads DCPG. GTP-binding positions include 81–85 and 136–139; these read DCPGH and NKID. The G4 stretch occupies residues 136–139; the sequence is NKID. Positions 177-179 are G5; sequence SAL.

Belongs to the TRAFAC class translation factor GTPase superfamily. Classic translation factor GTPase family. EF-Tu/EF-1A subfamily. In terms of assembly, monomer.

It localises to the cytoplasm. It catalyses the reaction GTP + H2O = GDP + phosphate + H(+). GTP hydrolase that promotes the GTP-dependent binding of aminoacyl-tRNA to the A-site of ribosomes during protein biosynthesis. This chain is Elongation factor Tu, found in Metamycoplasma hominis (strain ATCC 23114 / DSM 25592 / NBRC 14850 / NCTC 10111 / PG21) (Mycoplasma hominis).